Here is a 470-residue protein sequence, read N- to C-terminus: Neuraminidase (470 aa).

At 1 to 14 (MNPNQKIITIGSVS) the chain is on the intravirion side. The interval 11–32 (GSVSLGLVVLNILLHIVSITIT) is involved in apical transport and lipid raft association. A helical membrane pass occupies residues 15-35 (LGLVVLNILLHIVSITITVLV). Residues 32–86 (TVLVLPGNGNNPSCNETVIREYNETVRIERVTQWHNTNVIEYLERPESDHFMNNT) form a hypervariable stalk region region. Over 36–470 (LPGNGNNPSC…AILPFDIDKM (435 aa)) the chain is Virion surface. Residues asparagine 46, asparagine 54, and asparagine 84 are each glycosylated (N-linked (GlcNAc...) asparagine; by host). The tract at residues 89 to 470 (LCDAKGFAPF…AILPFDIDKM (382 aa)) is head of neuraminidase. 8 disulfide bridges follow: cysteine 90-cysteine 417, cysteine 122-cysteine 127, cysteine 182-cysteine 229, cysteine 231-cysteine 236, cysteine 277-cysteine 290, cysteine 279-cysteine 288, cysteine 316-cysteine 335, and cysteine 421-cysteine 446. Substrate is bound at residue arginine 116. Asparagine 144 is a glycosylation site (N-linked (GlcNAc...) asparagine; by host). The active-site Proton donor/acceptor is the aspartate 149. Arginine 150 contributes to the substrate binding site. Substrate is bound at residue 275–276 (EE). Residue arginine 291 coordinates substrate. Residue aspartate 292 coordinates Ca(2+). An N-linked (GlcNAc...) asparagine; by host glycan is attached at asparagine 293. The Ca(2+) site is built by glycine 296 and aspartate 322. Arginine 368 lines the substrate pocket. N-linked (GlcNAc...) asparagine; by host glycosylation occurs at asparagine 398. Tyrosine 402 functions as the Nucleophile in the catalytic mechanism.

This sequence belongs to the glycosyl hydrolase 34 family. In terms of assembly, homotetramer. It depends on Ca(2+) as a cofactor. N-glycosylated.

The protein resides in the virion membrane. The protein localises to the host apical cell membrane. The enzyme catalyses Hydrolysis of alpha-(2-&gt;3)-, alpha-(2-&gt;6)-, alpha-(2-&gt;8)- glycosidic linkages of terminal sialic acid residues in oligosaccharides, glycoproteins, glycolipids, colominic acid and synthetic substrates.. Its activity is regulated as follows. Inhibited by the neuraminidase inhibitors zanamivir (Relenza) and oseltamivir (Tamiflu). These drugs interfere with the release of progeny virus from infected cells and are effective against all influenza strains. Resistance to neuraminidase inhibitors is quite rare. In terms of biological role, catalyzes the removal of terminal sialic acid residues from viral and cellular glycoconjugates. Cleaves off the terminal sialic acids on the glycosylated HA during virus budding to facilitate virus release. Additionally helps virus spread through the circulation by further removing sialic acids from the cell surface. These cleavages prevent self-aggregation and ensure the efficient spread of the progeny virus from cell to cell. Otherwise, infection would be limited to one round of replication. Described as a receptor-destroying enzyme because it cleaves a terminal sialic acid from the cellular receptors. May facilitate viral invasion of the upper airways by cleaving the sialic acid moieties on the mucin of the airway epithelial cells. Likely to plays a role in the budding process through its association with lipid rafts during intracellular transport. May additionally display a raft-association independent effect on budding. Plays a role in the determination of host range restriction on replication and virulence. Sialidase activity in late endosome/lysosome traffic seems to enhance virus replication. This chain is Neuraminidase, found in Aves.